The sequence spans 224 residues: UPF0758 protein lwe1562 (224 aa).

The 123-residue stretch at 102-224 folds into the MPN domain; the sequence is VIRCPDDAVK…YISLKEKGYF (123 aa). Residues His-173, His-175, and Asp-186 each contribute to the Zn(2+) site. Residues 173 to 186 carry the JAMM motif motif; the sequence is HNHPSGDPTPSSED.

It belongs to the UPF0758 family.

The polypeptide is UPF0758 protein lwe1562 (Listeria welshimeri serovar 6b (strain ATCC 35897 / DSM 20650 / CCUG 15529 / CIP 8149 / NCTC 11857 / SLCC 5334 / V8)).